The following is a 152-amino-acid chain: Large ribosomal subunit protein eL32 (152 aa).

It belongs to the eukaryotic ribosomal protein eL32 family.

The polypeptide is Large ribosomal subunit protein eL32 (rpl32e) (Pyrobaculum aerophilum (strain ATCC 51768 / DSM 7523 / JCM 9630 / CIP 104966 / NBRC 100827 / IM2)).